A 262-amino-acid polypeptide reads, in one-letter code: Putative phosphatase HI_0003 (262 aa).

The active-site Nucleophile is D9. Residues D9 and N11 each contribute to the Mg(2+) site. Residues 43–44 and K189 contribute to the phosphate site; that span reads SA. D212 provides a ligand contact to Mg(2+). N215 contributes to the phosphate binding site.

It belongs to the HAD-like hydrolase superfamily. Cof family. Mg(2+) serves as cofactor.

This Haemophilus influenzae (strain ATCC 51907 / DSM 11121 / KW20 / Rd) protein is Putative phosphatase HI_0003.